A 400-amino-acid polypeptide reads, in one-letter code: Elongation factor Tu (400 aa).

One can recognise a tr-type G domain in the interval 10 to 210; the sequence is KPHVNVGTIG…ALDSYIPEPV (201 aa). Residues 19-26 form a G1 region; sequence GHVDHGKT. Position 19 to 26 (19 to 26) interacts with GTP; the sequence is GHVDHGKT. T26 contributes to the Mg(2+) binding site. The segment at 66–70 is G2; it reads ILTIA. A G3 region spans residues 87–90; sequence DCPG. GTP is bound by residues 87 to 91 and 142 to 145; these read DCPGH and NKCD. A G4 region spans residues 142–145; it reads NKCD. A G5 region spans residues 180-182; the sequence is SAI.

It belongs to the TRAFAC class translation factor GTPase superfamily. Classic translation factor GTPase family. EF-Tu/EF-1A subfamily. As to quaternary structure, monomer.

It localises to the cytoplasm. The enzyme catalyses GTP + H2O = GDP + phosphate + H(+). Functionally, GTP hydrolase that promotes the GTP-dependent binding of aminoacyl-tRNA to the A-site of ribosomes during protein biosynthesis. The sequence is that of Elongation factor Tu from Gemmatimonas aurantiaca (strain DSM 14586 / JCM 11422 / NBRC 100505 / T-27).